A 138-amino-acid polypeptide reads, in one-letter code: Small ribosomal subunit protein uS11c (138 aa).

The segment at M1–N21 is disordered. The segment covering G9–N21 has biased composition (basic residues).

It belongs to the universal ribosomal protein uS11 family. Part of the 30S ribosomal subunit.

The protein localises to the plastid. The protein resides in the chloroplast. The protein is Small ribosomal subunit protein uS11c of Ceratophyllum demersum (Rigid hornwort).